The chain runs to 576 residues: Glutamine--tRNA ligase (576 aa).

The short motif at proline 47–histidine 57 is the 'HIGH' region element. ATP is bound by residues glutamate 48–asparagine 50 and histidine 54–serine 60. Residues aspartate 80 and tyrosine 229 each coordinate L-glutamine. ATP-binding positions include threonine 248 and arginine 283 to leucine 284. The 'KMSKS' region signature appears at isoleucine 290–arginine 294.

It belongs to the class-I aminoacyl-tRNA synthetase family. As to quaternary structure, monomer.

Its subcellular location is the cytoplasm. It catalyses the reaction tRNA(Gln) + L-glutamine + ATP = L-glutaminyl-tRNA(Gln) + AMP + diphosphate. The chain is Glutamine--tRNA ligase from Ralstonia pickettii (strain 12J).